We begin with the raw amino-acid sequence, 475 residues long: ATP synthase subunit beta (475 aa).

155–162 (GGAGVGKT) is an ATP binding site.

Belongs to the ATPase alpha/beta chains family. F-type ATPases have 2 components, CF(1) - the catalytic core - and CF(0) - the membrane proton channel. CF(1) has five subunits: alpha(3), beta(3), gamma(1), delta(1), epsilon(1). CF(0) has three main subunits: a(1), b(2) and c(9-12). The alpha and beta chains form an alternating ring which encloses part of the gamma chain. CF(1) is attached to CF(0) by a central stalk formed by the gamma and epsilon chains, while a peripheral stalk is formed by the delta and b chains.

The protein resides in the cell inner membrane. The enzyme catalyses ATP + H2O + 4 H(+)(in) = ADP + phosphate + 5 H(+)(out). Produces ATP from ADP in the presence of a proton gradient across the membrane. The catalytic sites are hosted primarily by the beta subunits. The chain is ATP synthase subunit beta from Rhizobium etli (strain ATCC 51251 / DSM 11541 / JCM 21823 / NBRC 15573 / CFN 42).